The primary structure comprises 228 residues: Death domain-containing membrane protein NRADD (228 aa).

The Extracellular portion of the chain corresponds to 1–52; the sequence is MLHNVSKGVVYSDTALKGQDGDREGMWVGAGGALAPNTSSLFPPEPPGASSN. Residues N4 and N37 are each glycosylated (N-linked (GlcNAc...) asparagine). The helical; Signal-anchor for type III membrane protein transmembrane segment at 53-73 threads the bilayer; that stretch reads IIPVYCALLATVVLGLLAYVA. Over 74–228 the chain is Cytoplasmic; sequence FKCWRSRKQR…SSPAEGCSVV (155 aa). The Death domain maps to 143–222; sequence EEVQRLLILG…DVVQVLSSPA (80 aa).

As to quaternary structure, interacts with NTRK1. Isoform 1 and isoform 2 interact with NGFR. Interacts with SORT1. Isoform 1 is N-glycosylated. Isoform 2 is not N-glycosylated. As to expression, detected in embryo, including embryonic brain. Detected at very low levels in adult testis, spleen, thymus and lung.

The protein localises to the cell membrane. The protein resides in the nucleus. Functionally, modulates NTRK1 signaling. Can activate several intracellular signaling pathways, leading to activation of JUN. Promotes translocation of SORT1 to the cell membrane, and thereby hinders lysosomal degradation of SOTR1 and promotes its interaction with NGFR. Both isoform 1 and isoform 2 promote apoptosis. In Rattus norvegicus (Rat), this protein is Death domain-containing membrane protein NRADD (Nradd).